The primary structure comprises 446 residues: Methanol utilization control sensor protein MoxY (446 aa).

The next 3 helical transmembrane spans lie at 1-21 (MGLA…ILIV), 101-121 (WFSA…THYP), and 144-164 (FSII…LAFL). In terms of domain architecture, HAMP spans 167–219 (TLLTRRLQSVQAAMAQMQDGRLSVRAPDDRLTEFADLAAGVNALASHLQAEQA). Residues 390-409 (TDNGKGPQSGTGRPTPGFGQ) are disordered.

The protein resides in the cell inner membrane. Member of the two-component regulatory system MoxY/MoxX probably involved in the regulation of the methanol dehydrogenase expression. May function as a membrane-associated protein kinase that phosphorylates MoxX in response to environmental signals. The protein is Methanol utilization control sensor protein MoxY (moxY) of Paracoccus denitrificans.